The primary structure comprises 4307 residues: Cytoplasmic dynein 2 heavy chain 1 (4307 aa).

The segment at Met-1–Gln-1650 is stem. Leu-145 to Ser-152 lines the ATP pocket. Positions Asn-1074–Asp-1103 form a coiled coil. 4 AAA regions span residues Tyr-1651–Gly-1875, Glu-1938–Asp-2161, Ala-2251–Gly-2505, and His-2617–Lys-2863. Residues Gly-1689 to Thr-1696, Gly-1979 to Ser-1986, Gly-2291 to Gly-2298, and Gly-2655 to Arg-2662 each bind ATP. A stalk region spans residues Ala-2881 to Ile-3169. 3 coiled-coil regions span residues Leu-2897–Gln-2982, Leu-3109–Leu-3200, and Ile-3408–Glu-3442. 2 AAA regions span residues Leu-3244–Glu-3473 and Met-3690–Arg-3905.

This sequence belongs to the dynein heavy chain family. In terms of assembly, the cytoplasmic dynein complex 2 is probably composed by a heavy chain DYNC2H1 homodimer and a number of DYNC2LI1 light intermediate chains.

It is found in the cytoplasm. Its subcellular location is the cytoskeleton. It localises to the cilium axoneme. The protein resides in the cell membrane. In terms of biological role, may function as a motor for intraflagellar retrograde transport. Functions in cilia biogenesis. May play a role in transport between endoplasmic reticulum and Golgi or organization of the Golgi in cells. In Homo sapiens (Human), this protein is Cytoplasmic dynein 2 heavy chain 1 (DYNC2H1).